The sequence spans 384 residues: GDP-mannose transporter (384 aa).

Over 1–40 the chain is Cytoplasmic; that stretch reads MVEDKKTDDYTIEMDKMDQGSKNFEAAAPPPQPRTPPAGS. A helical membrane pass occupies residues 41–61; that stretch reads ISNNPILPVLAYCGSSILMTV. Topologically, residues 62–69 are lumenal; that stretch reads MNKYVLSG. The helical transmembrane segment at 70–90 threads the bilayer; sequence LDFNLNFFLLCVQSIVCIVAI. Residues 91–110 are Cytoplasmic-facing; it reads QTCKSCGLITYRDFSADEAR. Residues 111 to 127 form a helical membrane-spanning segment; sequence KWFPITLLLIGMIYTGS. The Lumenal segment spans residues 128 to 134; sequence KALQFLS. Residues 135–151 form a helical membrane-spanning segment; that stretch reads IPVYTIFKNLTIILIAY. At 152-160 the chain is on the cytoplasmic side; the sequence is GEVLWFGGS. Residues 161-182 traverse the membrane as a helical segment; that stretch reads VTGLTLFSFGLMVLSSIIAAWA. The Lumenal segment spans residues 183-200; the sequence is DIKHAVESTGDATAKVST. Residues 201 to 221 form a helical membrane-spanning segment; the sequence is LNAGYIWMLVNCLCTSSYVLG. Over 222-236 the chain is Cytoplasmic; that stretch reads MRKRIKLTNFKDFDT. Residues 237–257 traverse the membrane as a helical segment; that stretch reads LAMFYNNLLSIPVLIVLTGLM. Over 258-276 the chain is Lumenal; the sequence is EDWSSANITRNFPPADRNN. N-linked (GlcNAc...) asparagine glycosylation occurs at asparagine 264. A helical membrane pass occupies residues 277–297; it reads IIFAMILSGLSSVFISYTSAW. The Cytoplasmic portion of the chain corresponds to 298-305; the sequence is CVRVTSST. Residues 306-326 traverse the membrane as a helical segment; the sequence is TYSMVGALNKLPIALSGLIFF. The Lumenal portion of the chain corresponds to 327–329; sequence DAP. Residues 330 to 350 traverse the membrane as a helical segment; sequence VTFPSVSAIVVGFVSGIVYAV. At 351 to 384 the chain is on the cytoplasmic side; it reads AKIKQNAKPKTGVLPMSNPPVSASSQSMRDSLRS. The segment at 364-384 is disordered; it reads LPMSNPPVSASSQSMRDSLRS. Polar residues predominate over residues 369–384; the sequence is PPVSASSQSMRDSLRS.

It belongs to the TPT transporter family. SLC35D subfamily. As to quaternary structure, homooligomer.

It localises to the golgi apparatus membrane. The protein resides in the cytoplasmic vesicle membrane. Its subcellular location is the endoplasmic reticulum membrane. Its function is as follows. Involved in the import of GDP-mannose from the cytoplasm into the Golgi lumen. The sequence is that of GDP-mannose transporter (gmt1) from Aspergillus terreus (strain NIH 2624 / FGSC A1156).